The sequence spans 404 residues: Arginine biosynthesis bifunctional protein ArgJ (404 aa).

Substrate contacts are provided by T156, K182, T193, E277, N399, and S404. Residue T193 is the Nucleophile of the active site.

It belongs to the ArgJ family. Heterotetramer of two alpha and two beta chains.

The protein resides in the cytoplasm. The catalysed reaction is N(2)-acetyl-L-ornithine + L-glutamate = N-acetyl-L-glutamate + L-ornithine. It carries out the reaction L-glutamate + acetyl-CoA = N-acetyl-L-glutamate + CoA + H(+). The protein operates within amino-acid biosynthesis; L-arginine biosynthesis; L-ornithine and N-acetyl-L-glutamate from L-glutamate and N(2)-acetyl-L-ornithine (cyclic): step 1/1. It participates in amino-acid biosynthesis; L-arginine biosynthesis; N(2)-acetyl-L-ornithine from L-glutamate: step 1/4. Functionally, catalyzes two activities which are involved in the cyclic version of arginine biosynthesis: the synthesis of N-acetylglutamate from glutamate and acetyl-CoA as the acetyl donor, and of ornithine by transacetylation between N(2)-acetylornithine and glutamate. This Chlorobaculum tepidum (strain ATCC 49652 / DSM 12025 / NBRC 103806 / TLS) (Chlorobium tepidum) protein is Arginine biosynthesis bifunctional protein ArgJ.